Consider the following 255-residue polypeptide: EEF1A lysine methyltransferase 4 (255 aa).

S-adenosyl-L-methionine contacts are provided by Trp26 and Tyr30. A Phosphotyrosine modification is found at Tyr39. S-adenosyl-L-methionine contacts are provided by residues Trp41, Gly66, 88–89 (DY), 113–114 (DV), and Lys130. Residues 129–134 (EKGTLD) carry the Required for methyltransferase activity motif.

The protein belongs to the methyltransferase superfamily.

It catalyses the reaction L-lysyl-[protein] + S-adenosyl-L-methionine = N(6)-methyl-L-lysyl-[protein] + S-adenosyl-L-homocysteine + H(+). The enzyme catalyses N(6)-methyl-L-lysyl-[protein] + S-adenosyl-L-methionine = N(6),N(6)-dimethyl-L-lysyl-[protein] + S-adenosyl-L-homocysteine + H(+). The catalysed reaction is N(6),N(6)-dimethyl-L-lysyl-[protein] + S-adenosyl-L-methionine = N(6),N(6),N(6)-trimethyl-L-lysyl-[protein] + S-adenosyl-L-homocysteine + H(+). Its function is as follows. Protein-lysine methyltransferase that efficiently catalyzes three successive methylations on 'Lys-36' in eukaryotic translation elongation factor 1 alpha (EEF1A1 or EEF1A2). The sequence is that of EEF1A lysine methyltransferase 4 from Bos taurus (Bovine).